The chain runs to 382 residues: Pyrimidine monooxygenase RutA (382 aa).

FMN-binding positions include 68–69 (IK), N134, E143, 159–160 (RY), and S209.

This sequence belongs to the NtaA/SnaA/DszA monooxygenase family. RutA subfamily.

It catalyses the reaction uracil + FMNH2 + NADH + O2 = (Z)-3-ureidoacrylate + FMN + NAD(+) + H2O + H(+). The catalysed reaction is thymine + FMNH2 + NADH + O2 = (Z)-2-methylureidoacrylate + FMN + NAD(+) + H2O + H(+). Functionally, catalyzes the pyrimidine ring opening between N-3 and C-4 by an unusual flavin hydroperoxide-catalyzed mechanism, adding oxygen atoms in the process to yield ureidoacrylate peracid, that immediately reacts with FMN forming ureidoacrylate and FMN-N(5)-oxide. The FMN-N(5)-oxide reacts spontaneously with NADH to produce FMN. Requires the flavin reductase RutF to regenerate FMN in vivo. The polypeptide is Pyrimidine monooxygenase RutA (Escherichia coli (strain 55989 / EAEC)).